The following is a 160-amino-acid chain: Sperm acrosome-associated protein 5 (160 aa).

A signal peptide spans 1–21 (MKVCSIVVVILAVLLIAKLDA). The 129-residue stretch at 22–150 (KIYERCELAK…SEWLKGCSVR (129 aa)) folds into the C-type lysozyme domain. Intrachain disulfides connect cysteine 27/cysteine 147, cysteine 51/cysteine 135, cysteine 85/cysteine 100, and cysteine 96/cysteine 114. Glutamate 56 is a catalytic residue.

This sequence belongs to the glycosyl hydrolase 22 family.

It localises to the secreted. The enzyme catalyses Hydrolysis of (1-&gt;4)-beta-linkages between N-acetylmuramic acid and N-acetyl-D-glucosamine residues in a peptidoglycan and between N-acetyl-D-glucosamine residues in chitodextrins.. In Mus musculus (Mouse), this protein is Sperm acrosome-associated protein 5 (Spaca5).